Consider the following 274-residue polypeptide: Diaminopimelate epimerase (274 aa).

Residues asparagine 11, glutamine 44, and asparagine 64 each coordinate substrate. Residue cysteine 73 is the Proton donor of the active site. Substrate-binding positions include 74-75 (GN), asparagine 157, asparagine 190, and 208-209 (ER). Cysteine 217 serves as the catalytic Proton acceptor. Position 218-219 (218-219 (GS)) interacts with substrate.

This sequence belongs to the diaminopimelate epimerase family. As to quaternary structure, homodimer (Potential). Previously DapF has been proposed to be a monomer, however it seems that it adopts a dimeric structure.

It is found in the cytoplasm. The catalysed reaction is (2S,6S)-2,6-diaminopimelate = meso-2,6-diaminopimelate. It participates in amino-acid biosynthesis; L-lysine biosynthesis via DAP pathway; DL-2,6-diaminopimelate from LL-2,6-diaminopimelate: step 1/1. With respect to regulation, inhibited by LL-aziridino (LL-AziDAP), DL-aziridino (DL-AziDAP). Also inhibited by (2S,3R,6S)-2,6-diamino-3-fluoropimelate (L,L-3-fluoro-DAP) and (2R,3S,6S)-2,6-diamino-3-fluoropimelate (D,L-3-fluoro-DAP). In terms of biological role, catalyzes the stereoinversion of LL-2,6-diaminopimelate (L,L-DAP) to meso-diaminopimelate (meso-DAP), a precursor of L-lysine and an essential component of the bacterial peptidoglycan. Only accepts DAP isomers with the L configuration. The chain is Diaminopimelate epimerase from Haemophilus influenzae (strain ATCC 51907 / DSM 11121 / KW20 / Rd).